We begin with the raw amino-acid sequence, 452 residues long: Phosphoglucosamine mutase (452 aa).

Residue serine 108 is the Phosphoserine intermediate of the active site. Serine 108, aspartate 247, aspartate 249, and aspartate 251 together coordinate Mg(2+). Position 108 is a phosphoserine (serine 108).

Belongs to the phosphohexose mutase family. Mg(2+) is required as a cofactor. Post-translationally, activated by phosphorylation.

The catalysed reaction is alpha-D-glucosamine 1-phosphate = D-glucosamine 6-phosphate. Its function is as follows. Catalyzes the conversion of glucosamine-6-phosphate to glucosamine-1-phosphate. This Paraburkholderia phytofirmans (strain DSM 17436 / LMG 22146 / PsJN) (Burkholderia phytofirmans) protein is Phosphoglucosamine mutase.